The primary structure comprises 137 residues: Peptide methionine sulfoxide reductase MsrB (137 aa).

Residues 7 to 129 (PTENIEKLSD…NSASLNFVDD (123 aa)) form the MsrB domain. Residues C46, C49, C95, and C98 each contribute to the Zn(2+) site. Residue C118 is the Nucleophile of the active site.

Belongs to the MsrB Met sulfoxide reductase family. It depends on Zn(2+) as a cofactor.

It catalyses the reaction L-methionyl-[protein] + [thioredoxin]-disulfide + H2O = L-methionyl-(R)-S-oxide-[protein] + [thioredoxin]-dithiol. This Yersinia pseudotuberculosis serotype O:1b (strain IP 31758) protein is Peptide methionine sulfoxide reductase MsrB.